A 710-amino-acid chain; its full sequence is Bifunctional lysine-specific demethylase and histidyl-hydroxylase NO66 (710 aa).

The tract at residues Thr-103–Leu-137 is disordered. Basic residues predominate over residues Thr-109–Val-132. The JmjC domain maps to Cys-359–Ala-506. Fe cation-binding residues include His-405, Asp-407, and His-472.

Belongs to the ROX family. NO66 subfamily. Fe(2+) serves as cofactor.

Its subcellular location is the nucleus. It carries out the reaction N(6),N(6)-dimethyl-L-lysyl(36)-[histone H3] + 2 2-oxoglutarate + 2 O2 = L-lysyl(36)-[histone H3] + 2 formaldehyde + 2 succinate + 2 CO2. Its function is as follows. Oxygenase that can act as both a histone lysine demethylase and a ribosomal histidine hydroxylase. Specifically demethylates 'Lys-4' (H3K4me) and 'Lys-36' (H3K36me) of histone H3, thereby playing a central role in histone code. The polypeptide is Bifunctional lysine-specific demethylase and histidyl-hydroxylase NO66 (Brugia malayi (Filarial nematode worm)).